The following is a 317-amino-acid chain: Probable cell division protein WhiA (317 aa).

Positions 281–314 (SLKELGQMLDPPVGKSGINHRLRRIEKIAEELRK) form a DNA-binding region, H-T-H motif.

The protein belongs to the WhiA family.

Its function is as follows. Involved in cell division and chromosome segregation. The polypeptide is Probable cell division protein WhiA (Clostridium novyi (strain NT)).